Reading from the N-terminus, the 822-residue chain is Calpain-3 (822 aa).

The segment at 1 to 36 (MPTVISASVAPRTGAEPMSPGPIAQAAQDKGTEAGG) is disordered. One can recognise a Calpain catalytic domain in the interval 74–418 (LFVDPEFPPD…FTKLEICNLT (345 aa)). Active-site residues include Cys-129, His-335, and Asn-359. Residues 419 to 587 (ADALESDKLQ…KRNLSEEVEN (169 aa)) are domain III. Residues 588-650 (TISVDRPVKK…EPGNTDQESE (63 aa)) are linker. Residues 604 to 652 (IFVSDRANSNKELGVDQETEEGKDNTSPDKQAKSPQLEPGNTDQESEEQ) form a disordered region. A compositionally biased stretch (basic and acidic residues) spans 623–635 (EEGKDNTSPDKQA). EF-hand domains follow at residues 650–684 (EEQR…VVNK), 693–726 (FTLE…KKIK), 723–758 (KKIK…AGFH), and 788–822 (VRLE…TMYA). Residues 651–822 (EQRQFRNIFR…LEWLQLTMYA (172 aa)) form a domain IV region. Ca(2+) contacts are provided by Ala-663, Asp-666, Glu-668, Glu-673, Asp-706, Asp-708, Ser-710, Arg-712, Glu-717, Asp-736, Asp-738, Ser-740, Thr-742, Glu-747, Asp-801, Asp-803, Asp-805, and Ile-807.

It belongs to the peptidase C2 family. In terms of assembly, homodimer; via EF-hand domain 4. Interacts with TTN/titin. Interacts with CMYA5; this interaction, which results in CMYA5 proteolysis, may protect CAPN3 from autolysis. Interacts with SIMC1. Interacts with UTP25; the interaction is required for CAPN3 translocation to the nucleolus. In terms of tissue distribution, skeletal muscle.

Its subcellular location is the cytoplasm. The protein resides in the nucleus. The protein localises to the nucleolus. It carries out the reaction Broad endopeptidase activity.. Its activity is regulated as follows. Activated by micromolar concentrations of calcium and inhibited by calpastatin. Its function is as follows. Calcium-regulated non-lysosomal thiol-protease. Proteolytically cleaves CTBP1. Mediates, with UTP25, the proteasome-independent degradation of p53/TP53. This is Calpain-3 (CAPN3) from Bos taurus (Bovine).